We begin with the raw amino-acid sequence, 339 residues long: tRNA (cytidine(56)-2'-O)-methyltransferase (339 aa).

S-adenosyl-L-methionine is bound by residues leucine 79 and 105-109 (GSEKV). The HD domain maps to 188-295 (LIEHVKAVEG…VAQADNLFAG (108 aa)).

This sequence belongs to the aTrm56 family. In terms of assembly, homodimer.

It is found in the cytoplasm. The catalysed reaction is cytidine(56) in tRNA + S-adenosyl-L-methionine = 2'-O-methylcytidine(56) in tRNA + S-adenosyl-L-homocysteine + H(+). Functionally, specifically catalyzes the AdoMet-dependent 2'-O-ribose methylation of cytidine at position 56 in tRNAs. This is tRNA (cytidine(56)-2'-O)-methyltransferase from Thermoplasma acidophilum (strain ATCC 25905 / DSM 1728 / JCM 9062 / NBRC 15155 / AMRC-C165).